A 379-amino-acid polypeptide reads, in one-letter code: Chaperone protein DnaJ (379 aa).

The J domain maps to 4–69; that stretch reads DLYETLGVQK…QKRAAYDRYG (66 aa). The segment at 137-215 adopts a CR-type zinc-finger fold; the sequence is GKTAQIRVPT…CHGQGRVVEE (79 aa). Cys150, Cys153, Cys167, Cys170, Cys189, Cys192, Cys203, and Cys206 together coordinate Zn(2+). CXXCXGXG motif repeat units follow at residues 150–157, 167–174, 189–196, and 203–210; these read CDVCTGTG, CGTCQGTG, CPTCGGRG, and CTKCHGQG.

Belongs to the DnaJ family. As to quaternary structure, homodimer. It depends on Zn(2+) as a cofactor.

Its subcellular location is the cytoplasm. Participates actively in the response to hyperosmotic and heat shock by preventing the aggregation of stress-denatured proteins and by disaggregating proteins, also in an autonomous, DnaK-independent fashion. Unfolded proteins bind initially to DnaJ; upon interaction with the DnaJ-bound protein, DnaK hydrolyzes its bound ATP, resulting in the formation of a stable complex. GrpE releases ADP from DnaK; ATP binding to DnaK triggers the release of the substrate protein, thus completing the reaction cycle. Several rounds of ATP-dependent interactions between DnaJ, DnaK and GrpE are required for fully efficient folding. Also involved, together with DnaK and GrpE, in the DNA replication of plasmids through activation of initiation proteins. The polypeptide is Chaperone protein DnaJ (Rhizobium meliloti (strain 1021) (Ensifer meliloti)).